The chain runs to 217 residues: Putative thymidylate synthase (217 aa).

Cys139 is a catalytic residue.

It belongs to the thymidylate synthase family. Archaeal-type ThyA subfamily. As to quaternary structure, monomer.

Its subcellular location is the cytoplasm. Its pathway is pyrimidine metabolism; dTTP biosynthesis. In terms of biological role, may catalyze the biosynthesis of dTMP using an unknown cosubstrate. The protein is Putative thymidylate synthase of Methanosarcina barkeri (strain Fusaro / DSM 804).